The chain runs to 115 residues: Cyclin-dependent kinase 2-associated protein 1 (115 aa).

Residues 20–25 are interaction with CDK2AP2; it reads GSVHSP. S46 bears the Phosphoserine; by IKKE mark.

Belongs to the CDK2AP family. In terms of assembly, homodimer. Component of the nucleosome remodeling and deacetylase (NuRD) repressor complex, composed of core proteins MTA1, MTA2, MTA3, RBBP4, RBBP7, HDAC1, HDAC2, MBD2, MBD3, and peripherally associated proteins CDK2AP1, CDK2AP2, GATAD2A, GATAD2B, CHD3, CHD4 and CHD5. The exact stoichiometry of the NuRD complex is unknown, and some subunits such as MBD2 and MBD3, GATAD2A and GATAD2B, and CHD3, CHD4 and CHD5 define mutually exclusive NuRD complexes. Interacts with monomeric unphosphorylated CDK2. Interacts with CDK2AP2. Interacts with GATAD2A. Interacts with HDAC1. Interacts with HDAC2. Interacts with MBD2. Interacts with MBD3. Interacts with RBBP4. Interacts with RBBP7. In terms of processing, phosphorylated in vitro by IKBKE at Ser-46.

The protein localises to the nucleus. The protein resides in the chromosome. Functionally, inhibitor of cyclin-dependent kinase CDK2. Also acts as a component of the histone deacetylase NuRD complex which participates in the remodeling of chromatin. The chain is Cyclin-dependent kinase 2-associated protein 1 (CDK2AP1) from Homo sapiens (Human).